The primary structure comprises 230 residues: MTCCEGWTSCNGFSLLVLLLLGVTLNAIPLILNFVDEDQFFENPISCFEWWFPGIIGAGVMAIPATTMSLAARKRACCNNKTGMFLSSLLNAITVIGAAYCLLVSIQALAEGPLICNSQSNTTSSCEFSLKNLTANYKESFDLQWFFEDSCVPHTDSNNPSITNTTANNWRVYNLHFNSIENQHRIIHFSVFLGLLLVGILEILFGLSQIIIGFFGCLCGGVSNGRSQIV.

Residues 1 to 11 lie on the Lumenal side of the membrane; sequence MTCCEGWTSCN. Residues 12 to 32 traverse the membrane as a helical segment; sequence GFSLLVLLLLGVTLNAIPLIL. At 33–44 the chain is on the cytoplasmic side; that stretch reads NFVDEDQFFENP. Residues 45–65 traverse the membrane as a helical segment; sequence ISCFEWWFPGIIGAGVMAIPA. Residues 66–83 lie on the Lumenal side of the membrane; the sequence is TTMSLAARKRACCNNKTG. A helical transmembrane segment spans residues 84 to 104; the sequence is MFLSSLLNAITVIGAAYCLLV. Over 105–185 the chain is Cytoplasmic; that stretch reads SIQALAEGPL…HFNSIENQHR (81 aa). A helical transmembrane segment spans residues 186 to 206; the sequence is IIHFSVFLGLLLVGILEILFG. Over 207–230 the chain is Lumenal; the sequence is LSQIIIGFFGCLCGGVSNGRSQIV.

The protein belongs to the L6 tetraspanin family. Post-translationally, glycosylated at Asn-132 in presence of ceramide which inverts the orientation of TM4SF20 in membranes exposing these residues to the endoplasmic reticulum lumen. Cleaved by signal peptidase at Ser-14 but the peptide does not act as a signal peptide. Cleavage is inhibited by ceramide which inverts the orientation of TM4SF20 in membranes exposing the N-terminus to the cytosol and not to the endoplasmic reticulum lumen.

Its subcellular location is the membrane. The protein localises to the endoplasmic reticulum membrane. Its function is as follows. Polytopic transmembrane protein. Inhibits regulated intramembrane proteolysis (RIP) of CREB3L1, inhibiting its activation and the induction of collagen synthesis. In response to ceramide, which alters TM4SF20 membrane topology, stimulates RIP activation of CREB3L1. Ceramide reverses the direction through which transmembrane helices are translocated into the endoplasmic reticulum membrane during translation of TM4SF20, this mechanism is called 'regulated alternative translocation' (RAT) and regulates the function of the transmembrane protein. The sequence is that of Transmembrane 4 L6 family member 20 (TM4SF20) from Bos taurus (Bovine).